The chain runs to 287 residues: Large ribosomal subunit protein uL3 (287 aa).

The segment at 228 to 287 is disordered; that stretch reads KAPEAKPAKLSKKKQAKELAKAQAANQQTVEAKVDTPVVEPKPTEVKKAAPVVEKKGEDK. Residues 269 to 287 are compositionally biased toward basic and acidic residues; the sequence is KPTEVKKAAPVVEKKGEDK.

It belongs to the universal ribosomal protein uL3 family. Part of the 50S ribosomal subunit. Forms a cluster with proteins L14 and L19.

Its function is as follows. One of the primary rRNA binding proteins, it binds directly near the 3'-end of the 23S rRNA, where it nucleates assembly of the 50S subunit. This chain is Large ribosomal subunit protein uL3, found in Mycoplasma pneumoniae (strain ATCC 29342 / M129 / Subtype 1) (Mycoplasmoides pneumoniae).